A 257-amino-acid polypeptide reads, in one-letter code: Global transcriptional regulator CodY (257 aa).

The segment at 1–155 is GAF domain; sequence MSLLSKTREL…AATVIGMEIL (155 aa). Residues 203-222 constitute a DNA-binding region (H-T-H motif); that stretch reads ASKVADRVGITRSVIVNALR.

It belongs to the CodY family.

The protein localises to the cytoplasm. DNA-binding global transcriptional regulator which is involved in the adaptive response to starvation and acts by directly or indirectly controlling the expression of numerous genes in response to nutrient availability. During rapid exponential growth, CodY is highly active and represses genes whose products allow adaptation to nutrient depletion. The protein is Global transcriptional regulator CodY of Staphylococcus haemolyticus (strain JCSC1435).